Here is a 336-residue protein sequence, read N- to C-terminus: Holliday junction branch migration complex subunit RuvB (336 aa).

Positions 4 to 184 (ADRLISAASN…FGIVQRLEFY (181 aa)) are large ATPase domain (RuvB-L). ATP-binding positions include Ile-23, Arg-24, Gly-65, Lys-68, Thr-69, Thr-70, 131–133 (EDY), Arg-174, Tyr-184, and Arg-221. Residue Thr-69 coordinates Mg(2+). The tract at residues 185–255 (QVPDLQYIVG…VAAQALDMLN (71 aa)) is small ATPAse domain (RuvB-S). The segment at 258–336 (AEGFDYMDRK…HFGITPPEMP (79 aa)) is head domain (RuvB-H). Residues Arg-294, Arg-313, and Arg-318 each coordinate DNA.

Belongs to the RuvB family. Homohexamer. Forms an RuvA(8)-RuvB(12)-Holliday junction (HJ) complex. HJ DNA is sandwiched between 2 RuvA tetramers; dsDNA enters through RuvA and exits via RuvB. An RuvB hexamer assembles on each DNA strand where it exits the tetramer. Each RuvB hexamer is contacted by two RuvA subunits (via domain III) on 2 adjacent RuvB subunits; this complex drives branch migration. In the full resolvosome a probable DNA-RuvA(4)-RuvB(12)-RuvC(2) complex forms which resolves the HJ.

The protein localises to the cytoplasm. It carries out the reaction ATP + H2O = ADP + phosphate + H(+). Functionally, the RuvA-RuvB-RuvC complex processes Holliday junction (HJ) DNA during genetic recombination and DNA repair, while the RuvA-RuvB complex plays an important role in the rescue of blocked DNA replication forks via replication fork reversal (RFR). RuvA specifically binds to HJ cruciform DNA, conferring on it an open structure. The RuvB hexamer acts as an ATP-dependent pump, pulling dsDNA into and through the RuvAB complex. RuvB forms 2 homohexamers on either side of HJ DNA bound by 1 or 2 RuvA tetramers; 4 subunits per hexamer contact DNA at a time. Coordinated motions by a converter formed by DNA-disengaged RuvB subunits stimulates ATP hydrolysis and nucleotide exchange. Immobilization of the converter enables RuvB to convert the ATP-contained energy into a lever motion, pulling 2 nucleotides of DNA out of the RuvA tetramer per ATP hydrolyzed, thus driving DNA branch migration. The RuvB motors rotate together with the DNA substrate, which together with the progressing nucleotide cycle form the mechanistic basis for DNA recombination by continuous HJ branch migration. Branch migration allows RuvC to scan DNA until it finds its consensus sequence, where it cleaves and resolves cruciform DNA. This Enterobacter sp. (strain 638) protein is Holliday junction branch migration complex subunit RuvB.